A 337-amino-acid polypeptide reads, in one-letter code: Methionyl-tRNA formyltransferase (337 aa).

110–113 (SLLP) contacts (6S)-5,6,7,8-tetrahydrofolate.

The protein belongs to the Fmt family.

It carries out the reaction L-methionyl-tRNA(fMet) + (6R)-10-formyltetrahydrofolate = N-formyl-L-methionyl-tRNA(fMet) + (6S)-5,6,7,8-tetrahydrofolate + H(+). Its function is as follows. Attaches a formyl group to the free amino group of methionyl-tRNA(fMet). The formyl group appears to play a dual role in the initiator identity of N-formylmethionyl-tRNA by promoting its recognition by IF2 and preventing the misappropriation of this tRNA by the elongation apparatus. The chain is Methionyl-tRNA formyltransferase from Frankia casuarinae (strain DSM 45818 / CECT 9043 / HFP020203 / CcI3).